Reading from the N-terminus, the 244-residue chain is Large ribosomal subunit protein uL30w (244 aa).

Belongs to the universal ribosomal protein uL30 family.

This Arabidopsis thaliana (Mouse-ear cress) protein is Large ribosomal subunit protein uL30w (RPL7D).